A 950-amino-acid polypeptide reads, in one-letter code: MCNHHPRHSHDNDTIRIRGARTHNLKNIDLDIPRHKLVVVTGLSGSGKSSLAFDTLYAEGQRRYVESLSAYARQFLQMMDKPDVDLIEGLSPAISIEQKSTSHNPRSTVGTVTEIHDYLRLLYARVGTPYCPEHNLSLSSQTVSQMVDAVLKLPEDTRVMILGPAVRERKGEFVDFFADLQAQGFARVRVDGEVYQLDEVPKLEKNIKHNIDVVIDRVKVKADIKQRLAESFETALRHGNERALAMEMDSGEEHWFSARFACPVCSYSLPELEPRLFSFNNPMGSCPTCDGLGNTNFFDPEKVVAHPELSLATGAIDGWDKRNQFYFQMIQSLAHHYKFDVNVAWETLPEKVKKVVLHGSGKEVIDFTYLSERGTTFNRSHAFEGIIPNLERRYRETDSETVREKLREYQNHRACPSCGGARLRKEARYVYVGGEPLHEVSAWPLTKTHRFFETLDLDGNKKQIAEKILKEITERLGFLINVGLDYLNLSRSAETLSGGEAQRIRLASQIGSGLTGVMYVLDEPSIGLHQRDNDRLLATLKRLRDLGNSVIVVEHDEDAIREADFVVDMGPGAGEHGGNVLIADTPENVAKCEKSVTGQYLGGKKSIAVPSERTPVNPGRMLVLKGARGNNLKNVTLELPLGLITCITGVSGSGKSTLINDTLAKITARELNRAQEEPAPYDDIRGLEHLDKVINVDQSPIGRTPRSNPATYTGLFTPIRELFAGVPLSRERGYNVGRFSFNVKGGRCEACQGDGVIKVEMHFLPDVYVPCEVCHGKRYNRETLEIQYKGKNISQVLDMTVEEAREFFDAVPTVSRKLQTLMDVGLGYIRLGQSATTLSGGEAQRVKLALELSKRDTGRTLYILDEPTTGLHFADIALLLEVIGRLKGKGNSIVIIEHNLDVIKTADWIVDLGPEGGDGGGKVIAKGSPEQVAKIKGSYTGKYLKVALNK.

An ATP-binding site is contributed by 42 to 49 (GLSGSGKS). A C4-type zinc finger spans residues 262 to 289 (CPVCSYSLPELEPRLFSFNNPMGSCPTC). ABC transporter domains lie at 319-596 (WDKR…EKSV) and 616-945 (VNPG…KYLK). 649-656 (GVSGSGKS) is a binding site for ATP. The C4-type zinc-finger motif lies at 748–774 (CEACQGDGVIKVEMHFLPDVYVPCEVC).

The protein belongs to the ABC transporter superfamily. UvrA family. As to quaternary structure, forms a heterotetramer with UvrB during the search for lesions.

The protein resides in the cytoplasm. Its function is as follows. The UvrABC repair system catalyzes the recognition and processing of DNA lesions. UvrA is an ATPase and a DNA-binding protein. A damage recognition complex composed of 2 UvrA and 2 UvrB subunits scans DNA for abnormalities. When the presence of a lesion has been verified by UvrB, the UvrA molecules dissociate. The chain is UvrABC system protein A from Neisseria gonorrhoeae.